The following is a 427-amino-acid chain: Gamma-glutamyl phosphate reductase (427 aa).

The protein belongs to the gamma-glutamyl phosphate reductase family.

It is found in the cytoplasm. The enzyme catalyses L-glutamate 5-semialdehyde + phosphate + NADP(+) = L-glutamyl 5-phosphate + NADPH + H(+). It participates in amino-acid biosynthesis; L-proline biosynthesis; L-glutamate 5-semialdehyde from L-glutamate: step 2/2. Catalyzes the NADPH-dependent reduction of L-glutamate 5-phosphate into L-glutamate 5-semialdehyde and phosphate. The product spontaneously undergoes cyclization to form 1-pyrroline-5-carboxylate. This is Gamma-glutamyl phosphate reductase from Brucella melitensis biotype 2 (strain ATCC 23457).